The sequence spans 156 residues: MRNQSKQEELVKAFKALLKEEKFSSQGEIVLALQEAGFENINQSKVSRMLTKFGAVRTRNAKMEMVYCLQAELGVPTASSPLKNLVLDVDHNDALVVIHTSPGAAQLIARMLDSLGKSEGILGTIAGDDTVFTTPAPGFSVKRLYHFILVHFNQEL.

Belongs to the ArgR family.

Its subcellular location is the cytoplasm. Its pathway is amino-acid biosynthesis; L-arginine biosynthesis [regulation]. Its function is as follows. Regulates arginine biosynthesis genes. The protein is Arginine repressor of Sodalis glossinidius (strain morsitans).